Reading from the N-terminus, the 224-residue chain is Putative N-acetylmannosamine-6-phosphate 2-epimerase (224 aa).

Belongs to the NanE family.

It catalyses the reaction an N-acyl-D-glucosamine 6-phosphate = an N-acyl-D-mannosamine 6-phosphate. Its pathway is amino-sugar metabolism; N-acetylneuraminate degradation; D-fructose 6-phosphate from N-acetylneuraminate: step 3/5. Its function is as follows. Converts N-acetylmannosamine-6-phosphate (ManNAc-6-P) to N-acetylglucosamine-6-phosphate (GlcNAc-6-P). This Staphylococcus carnosus (strain TM300) protein is Putative N-acetylmannosamine-6-phosphate 2-epimerase.